The sequence spans 231 residues: Chromosome partition protein MukE (231 aa).

The disordered stretch occupies residues 197-231 (RDGEAMPIEGGLSLDDSENDETSDNSAEGTGDEQP).

It belongs to the MukE family. As to quaternary structure, interacts, and probably forms a ternary complex, with MukF and MukB. The complex formation is stimulated by calcium or magnesium.

Its subcellular location is the cytoplasm. It is found in the nucleoid. Functionally, involved in chromosome condensation, segregation and cell cycle progression. May participate in facilitating chromosome segregation by condensation DNA from both sides of a centrally located replisome during cell division. Probably acts via its interaction with MukB and MukF. This Photorhabdus laumondii subsp. laumondii (strain DSM 15139 / CIP 105565 / TT01) (Photorhabdus luminescens subsp. laumondii) protein is Chromosome partition protein MukE.